A 462-amino-acid chain; its full sequence is FAD-dependent monooxygenase opaC (462 aa).

N10 is a glycosylation site (N-linked (GlcNAc...) asparagine). Residues 14 to 34 (ITVIIIGLGIGGLTAAISCHL) traverse the membrane as a helical segment. Residue D43 participates in FAD binding. The N-linked (GlcNAc...) asparagine glycan is linked to N60. R115 is a binding site for FAD. Residue R193 is part of the active site. Positions 322 and 335 each coordinate FAD.

The protein belongs to the paxM FAD-dependent monooxygenase family. FAD serves as cofactor.

The protein localises to the membrane. It participates in secondary metabolite biosynthesis. In terms of biological role, FAD-dependent monooxygenase; part of the gene cluster that mediates the biosynthesis of oxepinamides, derivatives of anthranilyl-containing tripeptides that share an oxepin ring and a fused pyrimidinone moiety. The nonribosomal peptide synthetase (NRPS) opaA assembles the quinazolinone core with D-Phe incorporation. The first adenylation domain (A1) of opaA loads and activates anthranilic acid whereas the second A domain (A2) is for activating of L-Phe, which is then converted to D-form by the E domain. The third A domain (A3) is responsible for L-Ile activation and the terminal condensation domain C3 for cyclization and releasing the NRPS product protuboxepin K. The cytochrome P450 monooxygenase opaB then catalyzes alone the oxepin ring formation to convert protuboxepin K into protuboxepin A. The flavoenzyme opaC installs subsequently one hydroxyl group at the oxepin ring, accompanied by double bond migration, to form 15-epi-oxepinamide E. The epimerase opaE changes the D-Phe residue back to L-form, leading to oxepinamide E, which is further methylated at the hydroxyl group at C-12 by the O-methyltransferase OpaF to yield oxepinamide F. The protein is FAD-dependent monooxygenase opaC of Aspergillus ustus.